The sequence spans 247 residues: MSDPLILIPARLAATRLPSKPLADIAGEPMIVHVWRRAVEAGIGPVVVATDTDAIAAAIEAQGGLAVMTQPDHPSGSDRLAEALEIVDPDGNHDVVVNVQGDLPTIDPAIIAASVTPLADPQVDIATLCAVIHRPEEMDDPNVVKIIGHTVGPNRLRALAFTRARAPWGEGPLFHHIGLYAYRRKALARFVALPQGELERREKLEQLRALEAGMRIDAMIVEDLPLGVDTPADLERARTLLAIRRLN.

Belongs to the KdsB family.

The protein localises to the cytoplasm. It catalyses the reaction 3-deoxy-alpha-D-manno-oct-2-ulosonate + CTP = CMP-3-deoxy-beta-D-manno-octulosonate + diphosphate. It participates in nucleotide-sugar biosynthesis; CMP-3-deoxy-D-manno-octulosonate biosynthesis; CMP-3-deoxy-D-manno-octulosonate from 3-deoxy-D-manno-octulosonate and CTP: step 1/1. Its pathway is bacterial outer membrane biogenesis; lipopolysaccharide biosynthesis. Its function is as follows. Activates KDO (a required 8-carbon sugar) for incorporation into bacterial lipopolysaccharide in Gram-negative bacteria. This chain is 3-deoxy-manno-octulosonate cytidylyltransferase, found in Methylorubrum populi (strain ATCC BAA-705 / NCIMB 13946 / BJ001) (Methylobacterium populi).